A 60-amino-acid chain; its full sequence is Metallothionein A (60 aa).

Positions 1-28 (MDPCDCSKSGTCNCGGSCTCTNCSCKSC) are beta. Residues C4, C6, C12, C14, C18, C20, C23, C25, C28, C32, C33, C35, C36, C40, C43, C47, C49, C54, C58, and C59 each contribute to the a divalent metal cation site. Residues 29–60 (KKSCCPCCPSGCTKCASGCVCKGKTCDTSCCQ) are alpha.

The protein belongs to the metallothionein superfamily. Type 1 family.

Functionally, metallothioneins have a high content of cysteine residues that bind various heavy metals. The chain is Metallothionein A (mta) from Chionodraco hamatus (Antarctic teleost icefish).